Consider the following 259-residue polypeptide: Malonyl-[acyl-carrier protein] O-methyltransferase (259 aa).

It belongs to the methyltransferase superfamily.

It catalyses the reaction malonyl-[ACP] + S-adenosyl-L-methionine = malonyl-[ACP] methyl ester + S-adenosyl-L-homocysteine. Its pathway is cofactor biosynthesis; biotin biosynthesis. In terms of biological role, converts the free carboxyl group of a malonyl-thioester to its methyl ester by transfer of a methyl group from S-adenosyl-L-methionine (SAM). It allows to synthesize pimeloyl-ACP via the fatty acid synthetic pathway. In Anoxybacillus flavithermus (strain DSM 21510 / WK1), this protein is Malonyl-[acyl-carrier protein] O-methyltransferase.